The sequence spans 70 residues: Small ribosomal subunit protein bS21 (70 aa).

This sequence belongs to the bacterial ribosomal protein bS21 family.

The polypeptide is Small ribosomal subunit protein bS21 (Sulfurimonas denitrificans (strain ATCC 33889 / DSM 1251) (Thiomicrospira denitrificans (strain ATCC 33889 / DSM 1251))).